Consider the following 166-residue polypeptide: MRLILLSSLLLLGIFLANGHEEDPDGKVLNSLIDSLMHLQREFANLKDAFLTVHRARSFGSGSERLYVTNKEIKNFEALRQICEQAEGHIPSPQLENQNKAFANVLERHGKEAYLVVGDSANFTNWAAGEPNKAAGTCVKADTHGSWHSASCDDNRLVVCEFYFIL.

A signal peptide spans 1-19 (MRLILLSSLLLLGIFLANG). The C-type lectin domain maps to 46–161 (LKDAFLTVHR…CDDNRLVVCE (116 aa)). 2 disulfides stabilise this stretch: Cys83-Cys160 and Cys138-Cys152. Residue Asn122 is glycosylated (N-linked (GlcNAc...) asparagine).

Belongs to the alpha-type phospholipase A2 inhibitor family. Homotrimer; non-covalently linked. As to expression, expressed by the liver.

The protein resides in the secreted. Its function is as follows. This phospholipase A2 inhibitor binds directly phospholipase A2 in the presence or absence of calcium. This chain is Phospholipase A2 inhibitor clone 04, found in Bothrops moojeni (Lance-headed viper).